The sequence spans 591 residues: 2-succinyl-5-enolpyruvyl-6-hydroxy-3-cyclohexene-1-carboxylate synthase (591 aa).

This sequence belongs to the TPP enzyme family. MenD subfamily. Homodimer. The cofactor is Mg(2+). It depends on Mn(2+) as a cofactor. Requires thiamine diphosphate as cofactor.

It carries out the reaction isochorismate + 2-oxoglutarate + H(+) = 5-enolpyruvoyl-6-hydroxy-2-succinyl-cyclohex-3-ene-1-carboxylate + CO2. Its pathway is quinol/quinone metabolism; 1,4-dihydroxy-2-naphthoate biosynthesis; 1,4-dihydroxy-2-naphthoate from chorismate: step 2/7. It functions in the pathway quinol/quinone metabolism; menaquinone biosynthesis. Catalyzes the thiamine diphosphate-dependent decarboxylation of 2-oxoglutarate and the subsequent addition of the resulting succinic semialdehyde-thiamine pyrophosphate anion to isochorismate to yield 2-succinyl-5-enolpyruvyl-6-hydroxy-3-cyclohexene-1-carboxylate (SEPHCHC). This Salinibacter ruber (strain DSM 13855 / M31) protein is 2-succinyl-5-enolpyruvyl-6-hydroxy-3-cyclohexene-1-carboxylate synthase.